A 400-amino-acid chain; its full sequence is Elongation factor Tu 1 (400 aa).

A tr-type G domain is found at 10 to 209 (KPHVNIGTIG…AVDEYIPTPQ (200 aa)). The interval 19–26 (GHVDHGKT) is G1. GTP is bound at residue 19 to 26 (GHVDHGKT). Mg(2+) is bound at residue T26. Positions 60-64 (GITIN) are G2. Residues 81–84 (DCPG) are G3. Residues 81–85 (DCPGH) and 136–139 (NKAD) contribute to the GTP site. The segment at 136–139 (NKAD) is G4. Residues 174 to 176 (SAL) form a G5 region.

The protein belongs to the TRAFAC class translation factor GTPase superfamily. Classic translation factor GTPase family. EF-Tu/EF-1A subfamily. Monomer.

It is found in the cytoplasm. It catalyses the reaction GTP + H2O = GDP + phosphate + H(+). GTP hydrolase that promotes the GTP-dependent binding of aminoacyl-tRNA to the A-site of ribosomes during protein biosynthesis. The sequence is that of Elongation factor Tu 1 from Pelotomaculum thermopropionicum (strain DSM 13744 / JCM 10971 / SI).